The primary structure comprises 1058 residues: Ubiquitin-like modifier-activating enzyme 1 (1058 aa).

Residues methionine 1–glutamate 47 form a disordered region. Position 2 is an N-acetylserine (serine 2). Serine 2 is modified (N-acetylalanine). Residue serine 4 is modified to Phosphoserine. Residues proline 5–arginine 11 carry the Nuclear localization signal motif. A phosphoserine mark is found at serine 13, serine 21, serine 24, and serine 46. Positions serine 21–leucine 30 are enriched in polar residues. Phosphotyrosine is present on tyrosine 55. A run of 2 repeats spans residues glycine 63–phenylalanine 199 and glycine 459–isoleucine 611. A 2 approximate repeats region spans residues glycine 63–isoleucine 611. ATP contacts are provided by residues alanine 478, aspartate 504, arginine 515, lysine 528, and aspartate 576–asparagine 577. Lysine 528 is modified (N6-succinyllysine). The active-site Glycyl thioester intermediate is the cysteine 632. Lysine 671 carries the post-translational modification N6-acetyllysine. Phosphothreonine is present on threonine 800. Phosphoserine occurs at positions 810, 816, 820, and 835. The residue at position 980 (lysine 980) is an N6-acetyllysine.

Belongs to the ubiquitin-activating E1 family. Monomer. Interacts with GAN (via BTB domain). Post-translationally, ISGylated. Detected in erythrocytes (at protein level). Ubiquitous.

The protein localises to the cytoplasm. It is found in the mitochondrion. The protein resides in the nucleus. The enzyme catalyses ATP + ubiquitin + [E1 ubiquitin-activating enzyme]-L-cysteine = AMP + diphosphate + S-ubiquitinyl-[E1 ubiquitin-activating enzyme]-L-cysteine.. Its pathway is protein modification; protein ubiquitination. Its function is as follows. Catalyzes the first step in ubiquitin conjugation to mark cellular proteins for degradation through the ubiquitin-proteasome system. Activates ubiquitin by first adenylating its C-terminal glycine residue with ATP, and thereafter linking this residue to the side chain of a cysteine residue in E1, yielding a ubiquitin-E1 thioester and free AMP. Essential for the formation of radiation-induced foci, timely DNA repair and for response to replication stress. Promotes the recruitment of TP53BP1 and BRCA1 at DNA damage sites. This chain is Ubiquitin-like modifier-activating enzyme 1 (UBA1), found in Homo sapiens (Human).